We begin with the raw amino-acid sequence, 260 residues long: Outer membrane protein assembly factor BamD (260 aa).

The first 19 residues, methionine 1–alanine 19, serve as a signal peptide directing secretion. Cysteine 20 carries the N-palmitoyl cysteine lipid modification. Residue cysteine 20 is the site of S-diacylglycerol cysteine attachment.

This sequence belongs to the BamD family. Part of the Bam complex.

Its subcellular location is the cell outer membrane. Part of the outer membrane protein assembly complex, which is involved in assembly and insertion of beta-barrel proteins into the outer membrane. The sequence is that of Outer membrane protein assembly factor BamD from Pasteurella multocida (strain Pm70).